An 87-amino-acid polypeptide reads, in one-letter code: uncharacterized protein (87 aa).

The chain crosses the membrane as a helical span at residues 13 to 33; it reads LMIVSAVFGGIGIITTIVFVI. The interval 66–87 is disordered; that stretch reads EECGGSTETSSSKPKKKAKKEV. The span at 78-87 shows a compositional bias: basic residues; it reads KPKKKAKKEV.

The protein localises to the membrane. This is an uncharacterized protein from Caenorhabditis elegans.